A 466-amino-acid polypeptide reads, in one-letter code: Ribosomal protein uS12 methylthiotransferase RimO (466 aa).

Residues 18 to 133 (PRIGFVSLGC…VMDAVHQHVP (116 aa)) form the MTTase N-terminal domain. [4Fe-4S] cluster contacts are provided by Cys27, Cys63, Cys92, Cys164, Cys168, and Cys171. One can recognise a Radical SAM core domain in the interval 150-391 (LTPKHYAYLK…MAVAEAVSTA (242 aa)). Residues 394–466 (QRRVGSSMQV…QGHDLIGELI (73 aa)) enclose the TRAM domain.

This sequence belongs to the methylthiotransferase family. RimO subfamily. [4Fe-4S] cluster is required as a cofactor.

Its subcellular location is the cytoplasm. It carries out the reaction L-aspartate(89)-[ribosomal protein uS12]-hydrogen + (sulfur carrier)-SH + AH2 + 2 S-adenosyl-L-methionine = 3-methylsulfanyl-L-aspartate(89)-[ribosomal protein uS12]-hydrogen + (sulfur carrier)-H + 5'-deoxyadenosine + L-methionine + A + S-adenosyl-L-homocysteine + 2 H(+). Its function is as follows. Catalyzes the methylthiolation of an aspartic acid residue of ribosomal protein uS12. This is Ribosomal protein uS12 methylthiotransferase RimO from Leptothrix cholodnii (strain ATCC 51168 / LMG 8142 / SP-6) (Leptothrix discophora (strain SP-6)).